Consider the following 290-residue polypeptide: Bifunctional protein FolD (290 aa).

Residues 165 to 167 (GRG), Ser194, and Ile235 contribute to the NADP(+) site.

It belongs to the tetrahydrofolate dehydrogenase/cyclohydrolase family. In terms of assembly, homodimer.

The catalysed reaction is (6R)-5,10-methylene-5,6,7,8-tetrahydrofolate + NADP(+) = (6R)-5,10-methenyltetrahydrofolate + NADPH. It catalyses the reaction (6R)-5,10-methenyltetrahydrofolate + H2O = (6R)-10-formyltetrahydrofolate + H(+). It participates in one-carbon metabolism; tetrahydrofolate interconversion. In terms of biological role, catalyzes the oxidation of 5,10-methylenetetrahydrofolate to 5,10-methenyltetrahydrofolate and then the hydrolysis of 5,10-methenyltetrahydrofolate to 10-formyltetrahydrofolate. This chain is Bifunctional protein FolD, found in Syntrophotalea carbinolica (strain DSM 2380 / NBRC 103641 / GraBd1) (Pelobacter carbinolicus).